A 1093-amino-acid chain; its full sequence is MARPVRGGLGAPRRSPCLLLLWLLLLRLEPVTAAAGPRAPCAAACTCAGDSLDCGGRGLAALPGDLPSWTRSLNLSYNKLSEIDPAGFEDLPNLQEVYLNNNELTAVPSLGAASSHVVSLFLQHNKIRSVEGSQLKAYLSLEVLDLSLNNITEVRNTCFPHGPPIKELNLAGNRIGTLELGAFDGLSRSLLTLRLSKNRITQLPVRAFKLPRLTQLDLNRNRIRLIEGLTFQGLNSLEVLKLQRNNISKLTDGAFWGLSKMHVLHLEYNSLVEVNSGSLYGLTALHQLHLSNNSIARIHRKGWSFCQKLHELVLSFNNLTRLDEESLAELSSLSVLRLSHNSISHIAEGAFKGLRSLRVLDLDHNEISGTIEDTSGAFSGLDSLSKLTLFGNKIKSVAKRAFSGLEGLEHLNLGGNAIRSVQFDAFVKMKNLKELHISSDSFLCDCQLKWLPPWLIGRMLQAFVTATCAHPESLKGQSIFSVPPESFVCDDFLKPQIITQPETTMAMVGKDIRFTCSAASSSSSPMTFAWKKDNEVLTNADMENFVHVHAQDGEVMEYTTILHLRQVTFGHEGRYQCVITNHFGSTYSHKARLTVNVLPSFTKTPHDITIRTTTMARLECAATGHPNPQIAWQKDGGTDFPAARERRMHVMPDDDVFFITDVKIDDAGVYSCTAQNSAGSISANATLTVLETPSLVVPLEDRVVSVGETVALQCKATGNPPPRITWFKGDRPLSLTERHHLTPDNQLLVVQNVVAEDAGRYTCEMSNTLGTERAHSQLSVLPAAGCRKDGTTVGIFTIAVVSSIVLTSLVWVCIIYQTRKKSEEYSVTNTDETVVPPDVPSYLSSQGTLSDRQETVVRTEGGPQANGHIESNGVCPRDASHFPEPDTHSVACRQPKLCAGSAYHKEPWKAMEKAEGTPGPHKMEHGGRVVCSDCNTEVDCYSRGQAFHPQPVSRDSAQPSAPNGPEPGGSDQEHSPHHQCSRTAAGSCPECQGSLYPSNHDRMLTAVKKKPMASLDGKGDSSWTLARLYHPDSTELQPASSLTSGSPERAEAQYLLVSNGHLPKACDASPESTPLTGQLPGKQRVPLLLAPKS.

An N-terminal signal peptide occupies residues 1 to 34; that stretch reads MARPVRGGLGAPRRSPCLLLLWLLLLRLEPVTAA. The LRRNT domain occupies 35–68; sequence AGPRAPCAAACTCAGDSLDCGGRGLAALPGDLPS. Residues 35 to 794 are Extracellular-facing; it reads AGPRAPCAAA…GCRKDGTTVG (760 aa). Cysteines 45 and 54 form a disulfide. LRR repeat units follow at residues 69-90, 93-114, 116-137, 140-161, 164-185, 189-210, 212-233, 236-257, 260-281, 284-305, 308-329, 332-353, 356-378, 383-404, and 407-428; these read WTRS…GFED, NLQE…GAAS, HVVS…QLKA, SLEV…CFPH, PIKE…AFDG, SLLT…AFKL, RLTQ…TFQG, SLEV…AFWG, KMHV…SLYG, ALHQ…GWSF, KLHE…SLAE, SLSV…AFKG, SLRV…SGAF, SLSK…AFSG, and GLEH…AFVK. N-linked (GlcNAc...) asparagine glycosylation occurs at Asn74. An N-linked (GlcNAc...) asparagine glycan is attached at Asn150. Asn246 carries an N-linked (GlcNAc...) asparagine glycan. Asn292 and Asn318 each carry an N-linked (GlcNAc...) asparagine glycan. The LRRCT domain occupies 440–491; sequence DSFLCDCQLKWLPPWLIGRMLQAFVTATCAHPESLKGQSIFSVPPESFVCDD. Cystine bridges form between Cys444–Cys468, Cys446–Cys489, Cys516–Cys577, and Cys620–Cys672. 3 consecutive Ig-like C2-type domains span residues 495–594, 599–688, and 693–779; these read PQII…ARLT, PSFT…ATLT, and PSLV…SQLS. N-linked (GlcNAc...) asparagine glycosylation is present at Asn684. Cys714 and Cys763 are disulfide-bonded. A helical membrane pass occupies residues 795-815; it reads IFTIAVVSSIVLTSLVWVCII. The Cytoplasmic portion of the chain corresponds to 816-1093; the sequence is YQTRKKSEEY…RVPLLLAPKS (278 aa). Disordered stretches follow at residues 946–983 and 1063–1093; these read AFHP…CSRT and PKAC…APKS.

Interacts (via extracellular LRR and Ig-like domains) with EGFR/ERBB1, ERBB2, ERBB3 and ERBB4 (via extracellular domain). The physiological relevance of the interaction is controversial; LRIG1 may have low affinity for EGFR, and interaction may occur only when high levels of both proteins are present. Widely expressed.

It is found in the cell membrane. Its function is as follows. Acts as a feedback negative regulator of signaling by receptor tyrosine kinases, through a mechanism that involves enhancement of receptor ubiquitination and accelerated intracellular degradation. This is Leucine-rich repeats and immunoglobulin-like domains protein 1 from Homo sapiens (Human).